Here is a 473-residue protein sequence, read N- to C-terminus: Glycosyl hydrolase family 109 protein 2 (473 aa).

The tat-type signal signal peptide spans Met-1–Ala-31. Residues Gly-77–Arg-78, Asp-99, Trp-148–His-151, Glu-168–Val-169, and Asn-197 contribute to the NAD(+) site. Substrate contacts are provided by residues Tyr-226, Arg-244, Tyr-256–His-259, and Tyr-339. Tyr-256 lines the NAD(+) pocket.

This sequence belongs to the Gfo/Idh/MocA family. Glycosyl hydrolase 109 subfamily. It depends on NAD(+) as a cofactor. In terms of processing, predicted to be exported by the Tat system. The position of the signal peptide cleavage has not been experimentally proven.

Functionally, glycosidase. The polypeptide is Glycosyl hydrolase family 109 protein 2 (Akkermansia muciniphila (strain ATCC BAA-835 / DSM 22959 / JCM 33894 / BCRC 81048 / CCUG 64013 / CIP 107961 / Muc)).